The sequence spans 385 residues: 3-hydroxyisobutyryl-CoA hydrolase, mitochondrial (385 aa).

Positions 120, 145, 168, and 176 each coordinate substrate.

Belongs to the enoyl-CoA hydratase/isomerase family.

Its subcellular location is the mitochondrion. It carries out the reaction 3-hydroxy-2-methylpropanoyl-CoA + H2O = 3-hydroxy-2-methylpropanoate + CoA + H(+). It functions in the pathway amino-acid degradation; L-valine degradation. In terms of biological role, hydrolyzes 3-hydroxyisobutyryl-CoA (HIBYL-CoA), a saline catabolite. Has high activity toward isobutyryl-CoA. Could be an isobutyryl-CoA dehydrogenase that functions in valine catabolism. Also hydrolyzes 3-hydroxypropanoyl-CoA. The sequence is that of 3-hydroxyisobutyryl-CoA hydrolase, mitochondrial (HIBCH) from Gallus gallus (Chicken).